The following is a 435-amino-acid chain: Zinc finger CCCH domain-containing protein 10 (435 aa).

Positions 1–36 are disordered; it reads MPDRDSYANGTGSSGGGPGGGGSEEASGAGTGSGGA. Positions 12–35 are enriched in gly residues; it reads GSSGGGPGGGGSEEASGAGTGSGG. 3 consecutive C3H1-type zinc fingers follow at residues 36 to 63, 73 to 99, and 134 to 161; these read ATSD…HPDM, KNEF…HGSK, and KEEV…HLQR. The disordered stretch occupies residues 166–190; the sequence is DARGGGGTGGGGSTGSAPPGRRHDL. Over residues 168-179 the composition is skewed to gly residues; it reads RGGGGTGGGGST. 2 positions are modified to omega-N-methylarginine: Arg186 and Arg187. Residues 235–281 adopt a coiled-coil conformation; that stretch reads GVECRLLEEENALLRKRVEELKKQVSNLLATNEVLLEQNAQFRNQAK. Positions 315-331 are enriched in polar residues; sequence TTLSSQALQPRPVSQQE. The interval 315–363 is disordered; sequence TTLSSQALQPRPVSQQELVAPTGAPAAPPTNAAPPAAPPPPPPHLNPEI. Over residues 340-359 the composition is skewed to pro residues; that stretch reads AAPPTNAAPPAAPPPPPPHL.

Its subcellular location is the nucleus. Specific regulator of miRNA biogenesis. Binds, via the C3H1-type zinc finger domains, to the binding motif 5'-GCAGCGC-3' on microRNA pri-MIR143 and negatively regulates the processing to mature microRNA. This is Zinc finger CCCH domain-containing protein 10 (Zc3h10) from Mus musculus (Mouse).